The primary structure comprises 91 residues: Small integral membrane protein 12-A (91 aa).

A helical membrane pass occupies residues 12–34 (YAPYITFPVAFVVGAVGYQLEWF).

Belongs to the SMIM12 family.

It is found in the membrane. This is Small integral membrane protein 12-A (smim12-a) from Xenopus laevis (African clawed frog).